A 294-amino-acid polypeptide reads, in one-letter code: Complement C1q tumor necrosis factor-related protein 2 (294 aa).

A signal peptide spans 1 to 24 (MTIFKKVTTMISWVLLACALPCAA). Residues 42–156 (QLVCSLPGPQ…PGPCSCGSSR (115 aa)) are disordered. A Collagen-like domain is found at 48–150 (PGPQGPPGPP…KGEPGLPGPC (103 aa)). A compositionally biased stretch (pro residues) spans 50 to 59 (PQGPPGPPGA). Residues 75–87 (DGQDGQDGDRGDS) are compositionally biased toward basic and acidic residues. The segment covering 105–129 (KGKAGAIGRAGPRGPKGVSGTPGKH) has biased composition (low complexity). The C1q domain occupies 154-290 (SSRAKSAFSV…GFLIYADQGD (137 aa)).

In terms of assembly, may interact with ERFE.

Its subcellular location is the secreted. Involved in the regulation of lipid metabolism in adipose tissue and liver. The chain is Complement C1q tumor necrosis factor-related protein 2 (C1qtnf2) from Mus musculus (Mouse).